The following is a 486-amino-acid chain: Cytochrome P450 monooxygenase aclC (486 aa).

Residue Cys-427 participates in heme binding.

It belongs to the cytochrome P450 family. Heme serves as cofactor.

It participates in mycotoxin biosynthesis. Functionally, cytochrome P450 monooxygenase; part of the gene cluster that mediates the biosynthesis of aspirochlorine (or antibiotic A30641), an unusual halogenated spiro compound with distinctive antifungal properties due to selective inhibition of protein biosynthesis, and which is also active against bacteria, viruses, and murine tumor cells. The non-ribosomal peptide synthetase (NRPS) aclP is responsible the formation of the diketopiperazine (DKP) core from the condensation of 2 phenylalanine residues. One Phe residue is tailored into chlorotyrosine by hydroxylation and chlorination, whereas the second Phe undergoes an unprecedented C-C bond cleavage to be converted into glycine. After formation of the DKP, sulfur is incorporated into the DKP by conjugation with glutathione by aclG, followed by its stepwise degradation to the thiol by aclI, aclJ and aclK, and the dithiol oxidation by aclT. In addition, oxygenases (aclB, aclC, aclL and aclO) and O-methyltransferases (aclM and aclU) act as tailoring enzymes to produce the intermediate dechloroaspirochlorine. Ultimately, chlorination of dechloroaspirochlorine by the halogenase aclH is the last step in the aspirochlorine pathway. The chain is Cytochrome P450 monooxygenase aclC from Aspergillus oryzae (strain ATCC 42149 / RIB 40) (Yellow koji mold).